The primary structure comprises 214 residues: Adenylate kinase (214 aa).

Residue 10–15 (GAGKGT) participates in ATP binding. The segment at 30–59 (STGDMLRAAVKAGTPLGLEAKKVMDAGQLV) is NMP. Residues Thr-31, Arg-36, 57 to 59 (QLV), 85 to 88 (GFPR), and Gln-92 contribute to the AMP site. The tract at residues 122–159 (GRRVHPGSGRVYHVVFNPPKVEGKDDVTGEDLAIRPDD) is LID. Residues Arg-123 and 132-133 (VY) contribute to the ATP site. Positions 156 and 167 each coordinate AMP. Gln-200 provides a ligand contact to ATP.

This sequence belongs to the adenylate kinase family. As to quaternary structure, monomer.

The protein localises to the cytoplasm. The enzyme catalyses AMP + ATP = 2 ADP. It participates in purine metabolism; AMP biosynthesis via salvage pathway; AMP from ADP: step 1/1. In terms of biological role, catalyzes the reversible transfer of the terminal phosphate group between ATP and AMP. Plays an important role in cellular energy homeostasis and in adenine nucleotide metabolism. This is Adenylate kinase from Shewanella baltica (strain OS155 / ATCC BAA-1091).